A 73-amino-acid polypeptide reads, in one-letter code: Translational regulator CsrA (73 aa).

Residues 54–73 (ENRAASDSPWSPNSLPQLPV) form a disordered region. Over residues 61 to 73 (SPWSPNSLPQLPV) the composition is skewed to polar residues.

It belongs to the CsrA/RsmA family. In terms of assembly, homodimer; the beta-strands of each monomer intercalate to form a hydrophobic core, while the alpha-helices form wings that extend away from the core.

The protein localises to the cytoplasm. A translational regulator that binds mRNA to regulate translation initiation and/or mRNA stability. Usually binds in the 5'-UTR at or near the Shine-Dalgarno sequence preventing ribosome-binding, thus repressing translation. Its main target seems to be the major flagellin gene, while its function is anatagonized by FliW. This is Translational regulator CsrA from Treponema pallidum (strain Nichols).